A 292-amino-acid polypeptide reads, in one-letter code: Protease HtpX homolog (292 aa).

2 consecutive transmembrane segments (helical) span residues 4-24 (ILLF…VASL) and 39-59 (GALL…SLLI). A Zn(2+)-binding site is contributed by His-144. Glu-145 is an active-site residue. Zn(2+) is bound at residue His-148. The next 2 helical transmembrane spans lie at 159 to 179 (LIQG…GYAV) and 199 to 219 (VTTI…VAWF). Glu-224 provides a ligand contact to Zn(2+).

Belongs to the peptidase M48B family. Requires Zn(2+) as cofactor.

Its subcellular location is the cell inner membrane. This Verminephrobacter eiseniae (strain EF01-2) protein is Protease HtpX homolog.